A 257-amino-acid polypeptide reads, in one-letter code: Phosphatidylglycerol--prolipoprotein diacylglyceryl transferase (257 aa).

7 helical membrane passes run 13-33 (FGPI…AVGG), 49-69 (FLLN…RLMF), 88-108 (IYEG…AGLY), 123-143 (FAVV…IFNH), 152-172 (FFFG…FLLI), 186-202 (YQFW…RGVF), and 223-243 (IGLF…AYWM). Arg136 is an a 1,2-diacyl-sn-glycero-3-phospho-(1'-sn-glycerol) binding site.

The protein belongs to the Lgt family.

It is found in the cell membrane. The enzyme catalyses L-cysteinyl-[prolipoprotein] + a 1,2-diacyl-sn-glycero-3-phospho-(1'-sn-glycerol) = an S-1,2-diacyl-sn-glyceryl-L-cysteinyl-[prolipoprotein] + sn-glycerol 1-phosphate + H(+). It functions in the pathway protein modification; lipoprotein biosynthesis (diacylglyceryl transfer). In terms of biological role, catalyzes the transfer of the diacylglyceryl group from phosphatidylglycerol to the sulfhydryl group of the N-terminal cysteine of a prolipoprotein, the first step in the formation of mature lipoproteins. The chain is Phosphatidylglycerol--prolipoprotein diacylglyceryl transferase from Caldanaerobacter subterraneus subsp. tengcongensis (strain DSM 15242 / JCM 11007 / NBRC 100824 / MB4) (Thermoanaerobacter tengcongensis).